The primary structure comprises 64 residues: Conotoxin Pu3.4 (64 aa).

Positions 1-16 (LGVLLPICLLLFPLTA) are cleaved as a signal peptide. The propeptide occupies 17–49 (LPLDGDQPADRPAERMQDDFITEQHPLFDPVKR). Cystine bridges form between C50/C63, C51/C59, and C55/C62. 4-hydroxyproline is present on P61.

It belongs to the conotoxin M superfamily. Expressed by the venom duct.

It localises to the secreted. This Conus pulicarius (Flea-bitten cone) protein is Conotoxin Pu3.4.